The primary structure comprises 495 residues: Cytochrome P450 2E1 (495 aa).

298–303 contributes to the substrate binding site; that stretch reads FAGTET. Heme is bound at residue Cys-437.

The protein belongs to the cytochrome P450 family. In terms of assembly, interacts with chaperones HSP70 and HSP90; this interaction is required for initial targeting to mitochondria. Requires heme as cofactor.

It localises to the endoplasmic reticulum membrane. Its subcellular location is the microsome membrane. The protein localises to the mitochondrion inner membrane. The enzyme catalyses an organic molecule + reduced [NADPH--hemoprotein reductase] + O2 = an alcohol + oxidized [NADPH--hemoprotein reductase] + H2O + H(+). It carries out the reaction (5Z,8Z,11Z)-eicosatrienoate + reduced [NADPH--hemoprotein reductase] + O2 = 19-hydroxy-(5Z,8Z,11Z)-eicosatrienoate + oxidized [NADPH--hemoprotein reductase] + H2O + H(+). The catalysed reaction is (5Z,8Z,11Z,14Z,17Z)-eicosapentaenoate + reduced [NADPH--hemoprotein reductase] + O2 = 19-hydroxy-(5Z,8Z,11Z,14Z,17Z)-eicosapentaenoate + oxidized [NADPH--hemoprotein reductase] + H2O + H(+). It catalyses the reaction (4Z,7Z,10Z,13Z,16Z,19Z)-docosahexaenoate + reduced [NADPH--hemoprotein reductase] + O2 = 21-hydroxy-(4Z,7Z,10Z,13Z,16Z,19Z)-docosahexaenoate + oxidized [NADPH--hemoprotein reductase] + H2O + H(+). The enzyme catalyses dodecanoate + reduced [NADPH--hemoprotein reductase] + O2 = 11-hydroxydodecanoate + oxidized [NADPH--hemoprotein reductase] + H2O + H(+). It carries out the reaction tetradecanoate + reduced [NADPH--hemoprotein reductase] + O2 = 13-hydroxytetradecanoate + oxidized [NADPH--hemoprotein reductase] + H2O + H(+). The catalysed reaction is 4-nitrophenol + NADPH + O2 + H(+) = 4-nitrocatechol + NADP(+) + H2O. Its pathway is lipid metabolism; fatty acid metabolism. With respect to regulation, the omega-1 hydroxylase activity is stimulated by cytochrome b5. In terms of biological role, a cytochrome P450 monooxygenase involved in the metabolism of fatty acids. Mechanistically, uses molecular oxygen inserting one oxygen atom into a substrate, and reducing the second into a water molecule, with two electrons provided by NADPH via cytochrome P450 reductase (NADPH--hemoprotein reductase). Catalyzes the hydroxylation of carbon-hydrogen bonds. Hydroxylates fatty acids specifically at the omega-1 position displaying the highest catalytic activity for saturated fatty acids. May be involved in the oxidative metabolism of xenobiotics. The protein is Cytochrome P450 2E1 (CYP2E1) of Sus scrofa (Pig).